Reading from the N-terminus, the 903-residue chain is HTH-type transcriptional regulator MalT (903 aa).

39–46 (CPAGYGKT) lines the ATP pocket. The HTH luxR-type domain maps to 832-897 (ELIRTSPLTQ…DAVQQAQRLL (66 aa)). A DNA-binding region (H-T-H motif) is located at residues 856-875 (NDQIAGELEVAATTIKTHIR).

It belongs to the MalT family. Monomer in solution. Oligomerizes to an active state in the presence of the positive effectors ATP and maltotriose.

With respect to regulation, activated by ATP and maltotriose, which are both required for DNA binding. Positively regulates the transcription of the maltose regulon whose gene products are responsible for uptake and catabolism of malto-oligosaccharides. Specifically binds to the promoter region of its target genes, recognizing a short DNA motif called the MalT box. This chain is HTH-type transcriptional regulator MalT, found in Yersinia enterocolitica serotype O:8 / biotype 1B (strain NCTC 13174 / 8081).